The sequence spans 458 residues: MSSVIRKWALTALMAVSSTALFAQNPAASGQAANQGDNRRILRVDITGGISQPMPIAVPVMPTPSSVETLAGTTAVLGRQVASVISNDLKSSGLFTPSQQASLHNVSFPEVTAPQYSYWLSSGAQALVQGFVQANGDGTLTVGCYLYDVFASQEMLHKGFVVKPADWRRAAHKCADAVYTRLTGEGPYFDSRIVYISETGPKNHRLKRLAIMDQDGANHRFLTNGQSMVLTPRFAPNQQTVTYLSYVGNSPRIYVYTLGSGHVRLVVNKPNTTFAPRFSPDGKTIVFSMSVAGNTDIYKVPVSGGQATRLTTSPGIDTAPSFSPDGSKIVFESDRSGSQQIYIMNADGSNQNRISFGSGRYATPVWSPRGDLIAFTKLGGGFHVGVMKTDGSGEQILTNGWQDEGPSWSPNGRVIAFFRTARNSGHTELWSVDLTGVNERHIPTPLDGSDPSWGPLLP.

The first 23 residues, 1-23 (MSSVIRKWALTALMAVSSTALFA), serve as a signal peptide directing secretion.

It belongs to the TolB family. The Tol-Pal system is composed of five core proteins: the inner membrane proteins TolA, TolQ and TolR, the periplasmic protein TolB and the outer membrane protein Pal. They form a network linking the inner and outer membranes and the peptidoglycan layer.

Its subcellular location is the periplasm. Its function is as follows. Part of the Tol-Pal system, which plays a role in outer membrane invagination during cell division and is important for maintaining outer membrane integrity. This Zymomonas mobilis subsp. mobilis (strain ATCC 31821 / ZM4 / CP4) protein is Tol-Pal system protein TolB.